Reading from the N-terminus, the 258-residue chain is Tetraspanin-18B (258 aa).

Over 1-25 (MGLGEASARGTSMEGDCLSCIKYLM) the chain is Cytoplasmic. A helical membrane pass occupies residues 26-46 (FVFNFLIFLGGSFLLGVGVWV). Residues 47–61 (VVDPTGFREIVAANP) lie on the Extracellular side of the membrane. The chain crosses the membrane as a helical span at residues 62-82 (LLFTGVYIILAMGGMLFLLGF). Residues 83–94 (LGCCGAIRENKC) are Cytoplasmic-facing. Residues 95–115 (LLLFFFMLILIIFLAELAAAI) traverse the membrane as a helical segment. The Extracellular segment spans residues 116–228 (LAFIFREHLT…SAVVDYFEMY (113 aa)). Residue N141 is glycosylated (N-linked (GlcNAc...) asparagine). The helical transmembrane segment at 229-249 (IYVAGALAIVVLTIELFAMVF) threads the bilayer. Residues 250–258 (AMCLFRGIQ) are Cytoplasmic-facing.

The protein belongs to the tetraspanin (TM4SF) family.

The protein resides in the membrane. Functionally, may regulate angiogenesis through KDR/VEGFR2 and NOTCH1 pathways. This is Tetraspanin-18B (tspan18b) from Danio rerio (Zebrafish).